A 439-amino-acid chain; its full sequence is Acyl-coenzyme A thioesterase 9, mitochondrial (439 aa).

A mitochondrion-targeting transit peptide spans 1–21; that stretch reads MKRAAIRLWTLNKGLLTHGRG. HotDog ACOT-type domains lie at 85–209 and 289–401; these read SYIE…RDSE and EDTK…EKEV. K102 is subject to N6-acetyllysine.

It belongs to the acyl coenzyme A hydrolase family. In terms of assembly, interacts with NYAP1, NYAP2 and MYO16. In terms of tissue distribution, widely expressed.

It localises to the mitochondrion. The protein resides in the mitochondrion matrix. Its subcellular location is the mitochondrion inner membrane. It carries out the reaction butanoyl-CoA + H2O = butanoate + CoA + H(+). The enzyme catalyses propanoyl-CoA + H2O = propanoate + CoA + H(+). The catalysed reaction is hexadecanoyl-CoA + H2O = hexadecanoate + CoA + H(+). It catalyses the reaction octanoyl-CoA + H2O = octanoate + CoA + H(+). It carries out the reaction decanoyl-CoA + H2O = decanoate + CoA + H(+). The enzyme catalyses tetradecanoyl-CoA + H2O = tetradecanoate + CoA + H(+). The catalysed reaction is 4,8-dimethylnonanoyl-CoA + H2O = 4,8-dimethylnonanoate + CoA + H(+). It catalyses the reaction 3-methylbutanoyl-CoA + H2O = 3-methylbutanoate + CoA + H(+). It carries out the reaction 2-methylpropanoyl-CoA + H2O = 2-methylpropanoate + CoA + H(+). It functions in the pathway lipid metabolism; fatty acid metabolism. Strongly inhibited by NADH and CoA. Mitochondrial acyl-CoA thioesterase. Catalyzes the hydrolysis of acyl-CoAs into free fatty acids and coenzyme A (CoA), regulating their respective intracellular levels. Shows a clear preference for hydrophobic short-, medium-, and long-chain saturated acyl-CoAs with some activity also with short-chain dicarboxylic CoA esters. Regulates both mitochondrial lipid and amino acid metabolism. This is Acyl-coenzyme A thioesterase 9, mitochondrial (Acot9) from Mus musculus (Mouse).